Consider the following 147-residue polypeptide: Myoglobin (147 aa).

Residues 2–137 (ADFEMVLKHW…VMTTIIADIE (136 aa)) form the Globin domain. His60 lines the nitrite pocket. Position 60 (His60) interacts with O2. Position 89 (His89) interacts with heme b.

This sequence belongs to the globin family. Monomeric.

It is found in the cytoplasm. The protein resides in the sarcoplasm. It carries out the reaction Fe(III)-heme b-[protein] + nitric oxide + H2O = Fe(II)-heme b-[protein] + nitrite + 2 H(+). The catalysed reaction is H2O2 + AH2 = A + 2 H2O. In terms of biological role, monomeric heme protein which primary function is to store oxygen and facilitate its diffusion within muscle tissues. Reversibly binds oxygen through a pentacoordinated heme iron and enables its timely and efficient release as needed during periods of heightened demand. Depending on the oxidative conditions of tissues and cells, and in addition to its ability to bind oxygen, it also has a nitrite reductase activity whereby it regulates the production of bioactive nitric oxide. Under stress conditions, like hypoxia and anoxia, it also protects cells against reactive oxygen species thanks to its pseudoperoxidase activity. This is Myoglobin (mb) from Makaira nigricans (Atlantic blue marlin).